Reading from the N-terminus, the 264-residue chain is 3-methyl-2-oxobutanoate hydroxymethyltransferase (264 aa).

Mg(2+)-binding residues include Asp45 and Asp84. 3-methyl-2-oxobutanoate is bound by residues 45-46, Asp84, and Lys112; that span reads DS. Residue Glu114 coordinates Mg(2+). The Proton acceptor role is filled by Glu181.

This sequence belongs to the PanB family. Homodecamer; pentamer of dimers. The cofactor is Mg(2+).

It is found in the cytoplasm. The catalysed reaction is 3-methyl-2-oxobutanoate + (6R)-5,10-methylene-5,6,7,8-tetrahydrofolate + H2O = 2-dehydropantoate + (6S)-5,6,7,8-tetrahydrofolate. The protein operates within cofactor biosynthesis; (R)-pantothenate biosynthesis; (R)-pantoate from 3-methyl-2-oxobutanoate: step 1/2. In terms of biological role, catalyzes the reversible reaction in which hydroxymethyl group from 5,10-methylenetetrahydrofolate is transferred onto alpha-ketoisovalerate to form ketopantoate. The protein is 3-methyl-2-oxobutanoate hydroxymethyltransferase of Escherichia coli O7:K1 (strain IAI39 / ExPEC).